The chain runs to 126 residues: Holo-[acyl-carrier-protein] synthase (126 aa).

Positions 6 and 55 each coordinate Mg(2+).

The protein belongs to the P-Pant transferase superfamily. AcpS family. It depends on Mg(2+) as a cofactor.

The protein localises to the cytoplasm. The catalysed reaction is apo-[ACP] + CoA = holo-[ACP] + adenosine 3',5'-bisphosphate + H(+). Its function is as follows. Transfers the 4'-phosphopantetheine moiety from coenzyme A to a Ser of acyl-carrier-protein. This Chlorobium limicola (strain DSM 245 / NBRC 103803 / 6330) protein is Holo-[acyl-carrier-protein] synthase.